Reading from the N-terminus, the 226-residue chain is TPD1 protein homolog 1A (226 aa).

The signal sequence occupies residues 1–35; it reads MRVSSASSTPPPPAFAAAAWAVVLLAMLRSDVALA.

As to quaternary structure, interacts with MSP1. As to expression, expressed in roots, and anthers and ovules during meiosis.

In terms of biological role, involved in cell specification during anther development. Required for the differentiation of primary parietal cells into secondary parietal cells in anthers. May serve as an extracellular ligand for the MSP1 receptor kinase to limit sporocyte number in ovules. In Oryza sativa subsp. japonica (Rice), this protein is TPD1 protein homolog 1A.